The primary structure comprises 347 residues: NADH-ubiquinone oxidoreductase chain 2 (347 aa).

A run of 10 helical transmembrane segments spans residues 4-21 (LILS…LIVM), 26-45 (WLMV…PVLM), 59-79 (YFLT…INLI), 96-116 (IIMT…FWVP), 122-142 (IQLS…MSIL), 148-168 (AINM…GGWG), 201-221 (ALLN…TFML), 242-262 (TTIL…GFLP), 274-294 (DSII…YFYM), and 326-346 (LPPL…LMLL).

Belongs to the complex I subunit 2 family. Core subunit of respiratory chain NADH dehydrogenase (Complex I) which is composed of 45 different subunits. Interacts with TMEM242.

The protein localises to the mitochondrion inner membrane. The enzyme catalyses a ubiquinone + NADH + 5 H(+)(in) = a ubiquinol + NAD(+) + 4 H(+)(out). Core subunit of the mitochondrial membrane respiratory chain NADH dehydrogenase (Complex I) which catalyzes electron transfer from NADH through the respiratory chain, using ubiquinone as an electron acceptor. Essential for the catalytic activity and assembly of complex I. The sequence is that of NADH-ubiquinone oxidoreductase chain 2 from Syconycteris australis (Southern blossom bat).